We begin with the raw amino-acid sequence, 385 residues long: UPF0284 protein PMT9312_0438 (385 aa).

This sequence belongs to the UPF0284 family.

In Prochlorococcus marinus (strain MIT 9312), this protein is UPF0284 protein PMT9312_0438.